A 267-amino-acid chain; its full sequence is Small ribosomal subunit protein uS3 (267 aa).

One can recognise a KH type-2 domain in the interval Ile-39–Arg-114. Low complexity predominate over residues Ala-229 to Gly-248. The interval Ala-229–Asn-267 is disordered.

This sequence belongs to the universal ribosomal protein uS3 family. Part of the 30S ribosomal subunit. Forms a tight complex with proteins S10 and S14.

Its function is as follows. Binds the lower part of the 30S subunit head. Binds mRNA in the 70S ribosome, positioning it for translation. This is Small ribosomal subunit protein uS3 from Oenococcus oeni (strain ATCC BAA-331 / PSU-1).